A 230-amino-acid polypeptide reads, in one-letter code: Fibronectin type III domain-containing protein 4 (230 aa).

The N-terminal stretch at 1-40 is a signal peptide; that stretch reads MPGCLPADSVGTMASLMPLSPYLSPTVLLLVSCDLGFVRA. Residues 41-163 are Extracellular-facing; the sequence is DRPPSPVNVT…GLDGERPLQT (123 aa). In terms of domain architecture, Fibronectin type-III spans 43–136; sequence PPSPVNVTVT…PRVHFRTLKG (94 aa). N-linked (GlcNAc...) asparagine glycans are attached at residues Asn-48 and Asn-143. A disordered region spans residues 118–156; sequence GLRGESPPGPRVHFRTLKGSDRLPSNSSSPGDITVEGLD. Residues 164–184 form a helical membrane-spanning segment; sequence GEVVIIVVVLLMWAAVIGLFC. The Cytoplasmic segment spans residues 185-230; that stretch reads RQYDIIKDNDSNNNPKEKGKGPEQSPQGRPVGTRQKKSPSINTIDV. The span at 193 to 205 shows a compositional bias: basic and acidic residues; sequence NDSNNNPKEKGKG. Positions 193–230 are disordered; the sequence is NDSNNNPKEKGKGPEQSPQGRPVGTRQKKSPSINTIDV.

Its subcellular location is the membrane. The protein resides in the secreted. Functionally, has anti-inflammatory properties. In the colon, acts on macrophages to down-regulate inflammation. May suppress osteoclastogenesis and mature osteoclast resorptive function. In white adipose tissue, decreases local inflammation, via interaction with GPR116. Also required for proper systemic glucose tolerance, specifically sensitizing white adipocytes to insulin and promoting glucose uptake. The insulin sensitizing function in adipose tissue is mediated by interaction with ADGRF5/GPR116 and activation of cAMP signaling. The polypeptide is Fibronectin type III domain-containing protein 4 (FNDC4) (Bos taurus (Bovine)).